A 148-amino-acid chain; its full sequence is Probable TtuB-protein conjugate cleaving protease (148 aa).

In terms of domain architecture, MPN spans 22 to 148 (HGLVLYVPRG…EGQEVALVVL (127 aa)). The active-site Proton donor/acceptor is the E47. H101, H103, and D114 together coordinate Zn(2+). Residues 101 to 114 (HSHPKGPALPSPRD) carry the JAMM motif motif.

This sequence belongs to the peptidase M67B family. It depends on Zn(2+) as a cofactor.

Probable metalloprotease that cleaves the ubiquitin-like modifier protein TtuB from protein conjugates, hydrolyzing the isopeptide bond between a lysine residue of the target protein and the C-terminal glycine of the modifier protein. Does not seem to work for all the TtuB conjugates. This chain is Probable TtuB-protein conjugate cleaving protease, found in Thermus thermophilus (strain ATCC BAA-163 / DSM 7039 / HB27).